The primary structure comprises 514 residues: ATP synthase subunit alpha (514 aa).

170 to 177 (GDRQIGKT) provides a ligand contact to ATP.

The protein belongs to the ATPase alpha/beta chains family. In terms of assembly, F-type ATPases have 2 components, CF(1) - the catalytic core - and CF(0) - the membrane proton channel. CF(1) has five subunits: alpha(3), beta(3), gamma(1), delta(1), epsilon(1). CF(0) has three main subunits: a(1), b(2) and c(9-12). The alpha and beta chains form an alternating ring which encloses part of the gamma chain. CF(1) is attached to CF(0) by a central stalk formed by the gamma and epsilon chains, while a peripheral stalk is formed by the delta and b chains.

Its subcellular location is the cell inner membrane. The catalysed reaction is ATP + H2O + 4 H(+)(in) = ADP + phosphate + 5 H(+)(out). Functionally, produces ATP from ADP in the presence of a proton gradient across the membrane. The alpha chain is a regulatory subunit. In Marinobacter nauticus (strain ATCC 700491 / DSM 11845 / VT8) (Marinobacter aquaeolei), this protein is ATP synthase subunit alpha.